A 1216-amino-acid polypeptide reads, in one-letter code: DNA-directed RNA polymerase subunit beta (1216 aa).

Positions 1185–1216 are disordered; the sequence is EEKQELPSQEYESLNLDQELKTASENVSESEF. Residues 1190–1216 are compositionally biased toward polar residues; the sequence is LPSQEYESLNLDQELKTASENVSESEF.

The protein belongs to the RNA polymerase beta chain family. In terms of assembly, the RNAP catalytic core consists of 2 alpha, 1 beta, 1 beta' and 1 omega subunit. When a sigma factor is associated with the core the holoenzyme is formed, which can initiate transcription.

It catalyses the reaction RNA(n) + a ribonucleoside 5'-triphosphate = RNA(n+1) + diphosphate. In terms of biological role, DNA-dependent RNA polymerase catalyzes the transcription of DNA into RNA using the four ribonucleoside triphosphates as substrates. The sequence is that of DNA-directed RNA polymerase subunit beta from Mycoplasmopsis pulmonis (strain UAB CTIP) (Mycoplasma pulmonis).